Reading from the N-terminus, the 300-residue chain is Haloalkane dehalogenase (300 aa).

In terms of domain architecture, AB hydrolase-1 spans 32 to 155; the sequence is AIVFQHGNPT…PAVRGVFQGF (124 aa). The active-site Nucleophile is the aspartate 109. The active-site Proton donor is the glutamate 133. Histidine 273 functions as the Proton acceptor in the catalytic mechanism.

The protein belongs to the haloalkane dehalogenase family. Type 2 subfamily. Monomer.

The catalysed reaction is 1-haloalkane + H2O = a halide anion + a primary alcohol + H(+). Its function is as follows. Catalyzes hydrolytic cleavage of carbon-halogen bonds in halogenated aliphatic compounds, leading to the formation of the corresponding primary alcohols, halide ions and protons. The protein is Haloalkane dehalogenase of Mycobacterium tuberculosis (strain ATCC 25177 / H37Ra).